A 469-amino-acid polypeptide reads, in one-letter code: Ribulose bisphosphate carboxylase large chain (469 aa).

Residues 1–2 (MS) constitute a propeptide that is removed on maturation. At proline 3 the chain carries N-acetylproline. Lysine 14 carries the N6,N6,N6-trimethyllysine modification. Residues asparagine 123 and threonine 173 each coordinate substrate. Lysine 175 serves as the catalytic Proton acceptor. A substrate-binding site is contributed by lysine 177. Positions 201, 203, and 204 each coordinate Mg(2+). N6-carboxylysine is present on lysine 201. Histidine 294 serves as the catalytic Proton acceptor. Residues arginine 295, histidine 327, and serine 379 each contribute to the substrate site.

This sequence belongs to the RuBisCO large chain family. Type I subfamily. In terms of assembly, heterohexadecamer of 8 large chains and 8 small chains; disulfide-linked. The disulfide link is formed within the large subunit homodimers. Mg(2+) is required as a cofactor. Post-translationally, the disulfide bond which can form in the large chain dimeric partners within the hexadecamer appears to be associated with oxidative stress and protein turnover.

The protein localises to the plastid. It is found in the chloroplast. The catalysed reaction is 2 (2R)-3-phosphoglycerate + 2 H(+) = D-ribulose 1,5-bisphosphate + CO2 + H2O. It catalyses the reaction D-ribulose 1,5-bisphosphate + O2 = 2-phosphoglycolate + (2R)-3-phosphoglycerate + 2 H(+). In terms of biological role, ruBisCO catalyzes two reactions: the carboxylation of D-ribulose 1,5-bisphosphate, the primary event in carbon dioxide fixation, as well as the oxidative fragmentation of the pentose substrate in the photorespiration process. Both reactions occur simultaneously and in competition at the same active site. This is Ribulose bisphosphate carboxylase large chain from Dianthus caryophyllus (Carnation).